The following is a 313-amino-acid chain: Spermatid maturation protein 1 (313 aa).

The chain crosses the membrane as a helical span at residues 29-49 (ILLLLGLIICINIGINMVTLL). 4 disordered regions span residues 71-90 (KLRS…PAVH), 97-151 (AVKM…HNWD), 243-263 (EPPI…SSGR), and 291-313 (LASG…MTER). Over residues 76–85 (GKQTQPSKHS) the composition is skewed to polar residues. The span at 107–122 (TRRRHRRGSSSRRARR) shows a compositional bias: basic residues. Residues 263 to 289 (RVTYDARDVRRRLRELTREVEALSHCY) adopt a coiled-coil conformation. Residues 300–313 (GTRKDWVYRSMTER) show a composition bias toward basic and acidic residues.

It localises to the membrane. It is found in the cytoplasm. Functionally, required for proper cytoplasm removal during spermatogenesis. This is Spermatid maturation protein 1 (SPEM1) from Bos taurus (Bovine).